The chain runs to 426 residues: Serine protease HTRA2, mitochondrial (426 aa).

Low complexity predominate over residues serine 31–asparagine 58. Residues serine 31–aspartate 59 form a disordered region. The chain crosses the membrane as a helical span at residues phenylalanine 71–glycine 87. The IAP-binding motif lies at alanine 79 to serine 82. The tract at residues serine 143–leucine 306 is serine protease. Catalysis depends on charge relay system residues histidine 161, aspartate 193, and serine 270. In terms of domain architecture, PDZ spans methionine 329–valine 414.

Belongs to the peptidase S1C family. In terms of assembly, interacts with th/DIAP1 (via BIR 2 domain).

The protein localises to the mitochondrion intermembrane space. Its subcellular location is the mitochondrion membrane. It carries out the reaction Cleavage of non-polar aliphatic amino-acids at the P1 position, with a preference for Val, Ile and Met. At the P2 and P3 positions, Arg is selected most strongly with a secondary preference for other hydrophilic residues.. Functionally, serine protease that shows proteolytic activity against a non-specific substrate beta-casein. Promotes or induces cell death either by direct binding to and inhibition of BIRC proteins (also called inhibitor of apoptosis proteins, IAPs), leading to an increase in caspase activity, or by a BIRC inhibition-independent, caspase-independent and serine protease activity-dependent mechanism. Can antagonize antiapoptotic activity of th/Diap1 by directly inducing the degradation of th/Diap1. The chain is Serine protease HTRA2, mitochondrial from Drosophila grimshawi (Hawaiian fruit fly).